Reading from the N-terminus, the 401-residue chain is 8-amino-7-oxononanoate synthase (401 aa).

Substrate is bound at residue Arg24. 111–112 is a pyridoxal 5'-phosphate binding site; it reads GF. Residue His137 participates in substrate binding. Residues Ser183, His211, and Thr240 each contribute to the pyridoxal 5'-phosphate site. Lys243 is modified (N6-(pyridoxal phosphate)lysine). Residue Thr357 coordinates substrate.

The protein belongs to the class-II pyridoxal-phosphate-dependent aminotransferase family. BioF subfamily. Homodimer. It depends on pyridoxal 5'-phosphate as a cofactor.

The enzyme catalyses 6-carboxyhexanoyl-[ACP] + L-alanine + H(+) = (8S)-8-amino-7-oxononanoate + holo-[ACP] + CO2. The protein operates within cofactor biosynthesis; biotin biosynthesis. Its function is as follows. Catalyzes the decarboxylative condensation of pimeloyl-[acyl-carrier protein] and L-alanine to produce 8-amino-7-oxononanoate (AON), [acyl-carrier protein], and carbon dioxide. The protein is 8-amino-7-oxononanoate synthase of Xylella fastidiosa (strain 9a5c).